The sequence spans 571 residues: Methionine--tRNA ligase (571 aa).

The 'HIGH' region signature appears at 10 to 20 (PYVNAVPHLGN). Residues Cys143, Cys146, Cys156, and Cys159 each coordinate Zn(2+). The 'KMSKS' region signature appears at 333–337 (KFSKS). Lys336 is an ATP binding site.

It belongs to the class-I aminoacyl-tRNA synthetase family. MetG type 1 subfamily. The cofactor is Zn(2+).

The protein localises to the cytoplasm. It carries out the reaction tRNA(Met) + L-methionine + ATP = L-methionyl-tRNA(Met) + AMP + diphosphate. Is required not only for elongation of protein synthesis but also for the initiation of all mRNA translation through initiator tRNA(fMet) aminoacylation. The polypeptide is Methionine--tRNA ligase (Sulfolobus acidocaldarius (strain ATCC 33909 / DSM 639 / JCM 8929 / NBRC 15157 / NCIMB 11770)).